The following is a 98-amino-acid chain: Large ribosomal subunit protein uL23 (98 aa).

The protein belongs to the universal ribosomal protein uL23 family. Part of the 50S ribosomal subunit. Contacts protein L29, and trigger factor when it is bound to the ribosome.

In terms of biological role, one of the early assembly proteins it binds 23S rRNA. One of the proteins that surrounds the polypeptide exit tunnel on the outside of the ribosome. Forms the main docking site for trigger factor binding to the ribosome. The sequence is that of Large ribosomal subunit protein uL23 from Cereibacter sphaeroides (strain ATCC 17029 / ATH 2.4.9) (Rhodobacter sphaeroides).